We begin with the raw amino-acid sequence, 263 residues long: Ribonuclease HII (263 aa).

The 192-residue stretch at 71–262 (KAIAGIDEVG…VKSMCCDSTN (192 aa)) folds into the RNase H type-2 domain. Residues aspartate 77, glutamate 78, and aspartate 172 each contribute to the a divalent metal cation site.

The protein belongs to the RNase HII family. The cofactor is Mn(2+). Mg(2+) serves as cofactor.

The protein resides in the cytoplasm. It carries out the reaction Endonucleolytic cleavage to 5'-phosphomonoester.. In terms of biological role, endonuclease that specifically degrades the RNA of RNA-DNA hybrids. In Streptococcus pyogenes serotype M1, this protein is Ribonuclease HII.